Consider the following 321-residue polypeptide: Glucokinase (321 aa).

9–14 (ADIGGT) is an ATP binding site.

Belongs to the bacterial glucokinase family.

It localises to the cytoplasm. It carries out the reaction D-glucose + ATP = D-glucose 6-phosphate + ADP + H(+). The sequence is that of Glucokinase from Saccharophagus degradans (strain 2-40 / ATCC 43961 / DSM 17024).